A 184-amino-acid chain; its full sequence is uncharacterized protein (184 aa).

This is an uncharacterized protein from Caenorhabditis elegans.